The chain runs to 319 residues: 2-dehydropantoate 2-reductase (319 aa).

NADP(+) is bound by residues 10–15 (GTGALG) and Asn-105. Asn-105 contacts substrate. Catalysis depends on Lys-192, which acts as the Proton donor. The substrate site is built by Asn-196, Asn-200, and Ser-262. Glu-274 serves as a coordination point for NADP(+).

It belongs to the ketopantoate reductase family.

Its subcellular location is the cytoplasm. The enzyme catalyses (R)-pantoate + NADP(+) = 2-dehydropantoate + NADPH + H(+). It functions in the pathway cofactor biosynthesis; (R)-pantothenate biosynthesis; (R)-pantoate from 3-methyl-2-oxobutanoate: step 2/2. Functionally, catalyzes the NADPH-dependent reduction of ketopantoate into pantoic acid. The sequence is that of 2-dehydropantoate 2-reductase from Nostoc sp. (strain PCC 7120 / SAG 25.82 / UTEX 2576).